We begin with the raw amino-acid sequence, 257 residues long: 3-oxo-5-alpha-steroid 4-dehydrogenase 1 (257 aa).

Helical transmembrane passes span 7–27 (FLLDALAYLECALGVVCYVLL), 50–70 (AAWTVQELPSLALPLLACAGA), 84–104 (ILLAMFLVHYAQRSLVFPFLI), 109–129 (PMPLYAFLLAFIFCTYNGYLQ), 149–169 (FLTGSALWLIGMLINIHSDHV), and 208–228 (ALASWSIQGWAFAVFTFCVLF).

The protein belongs to the steroid 5-alpha reductase family.

Its subcellular location is the microsome membrane. The protein localises to the endoplasmic reticulum membrane. The enzyme catalyses a 3-oxo-5alpha-steroid + NADP(+) = a 3-oxo-Delta(4)-steroid + NADPH + H(+). It carries out the reaction 5alpha-pregnane-3,20-dione + NADP(+) = progesterone + NADPH + H(+). The catalysed reaction is 17beta-hydroxy-5alpha-androstan-3-one + NADP(+) = testosterone + NADPH + H(+). It catalyses the reaction androst-4-ene-3,17-dione + NADPH + H(+) = 5alpha-androstan-3,17-dione + NADP(+). In terms of biological role, converts testosterone into 5-alpha-dihydrotestosterone and progesterone or corticosterone into their corresponding 5-alpha-3-oxosteroids. It plays a central role in sexual differentiation and androgen physiology. In Bos taurus (Bovine), this protein is 3-oxo-5-alpha-steroid 4-dehydrogenase 1 (SRD5A1).